The following is a 156-amino-acid chain: Succinate dehydrogenase assembly factor 2-B, mitochondrial (156 aa).

A mitochondrion-targeting transit peptide spans 1 to 24 (MLRQLIVSTVGRRMPLQMISQSRL).

It belongs to the SDHAF2 family. Interacts with the flavoprotein subunit within the SDH catalytic dimer.

It is found in the mitochondrion matrix. Functionally, plays an essential role in the assembly of succinate dehydrogenase (SDH), an enzyme complex (also referred to as respiratory complex II) that is a component of both the tricarboxylic acid (TCA) cycle and the mitochondrial electron transport chain, and which couples the oxidation of succinate to fumarate with the reduction of ubiquinone (coenzyme Q) to ubiquinol. Required for flavinylation (covalent attachment of FAD) of the flavoprotein subunit of the SDH catalytic dimer. This is Succinate dehydrogenase assembly factor 2-B, mitochondrial from Drosophila erecta (Fruit fly).